A 499-amino-acid polypeptide reads, in one-letter code: UDP-N-acetylmuramoyl-L-alanyl-D-glutamate--2,6-diaminopimelate ligase (499 aa).

Positions 30 and 32 each coordinate UDP-N-acetyl-alpha-D-muramoyl-L-alanyl-D-glutamate. 122-128 (GTNGKTT) is a binding site for ATP. Residues 164 to 165 (TT), S191, Q197, and R199 each bind UDP-N-acetyl-alpha-D-muramoyl-L-alanyl-D-glutamate. N6-carboxylysine is present on K231. Meso-2,6-diaminopimelate is bound by residues R397, 421-424 (DNPR), G472, and E476. Positions 421 to 424 (DNPR) match the Meso-diaminopimelate recognition motif motif.

Belongs to the MurCDEF family. MurE subfamily. It depends on Mg(2+) as a cofactor. Post-translationally, carboxylation is probably crucial for Mg(2+) binding and, consequently, for the gamma-phosphate positioning of ATP.

It is found in the cytoplasm. It carries out the reaction UDP-N-acetyl-alpha-D-muramoyl-L-alanyl-D-glutamate + meso-2,6-diaminopimelate + ATP = UDP-N-acetyl-alpha-D-muramoyl-L-alanyl-gamma-D-glutamyl-meso-2,6-diaminopimelate + ADP + phosphate + H(+). Its pathway is cell wall biogenesis; peptidoglycan biosynthesis. Its function is as follows. Catalyzes the addition of meso-diaminopimelic acid to the nucleotide precursor UDP-N-acetylmuramoyl-L-alanyl-D-glutamate (UMAG) in the biosynthesis of bacterial cell-wall peptidoglycan. This is UDP-N-acetylmuramoyl-L-alanyl-D-glutamate--2,6-diaminopimelate ligase from Blochmanniella floridana.